Here is a 123-residue protein sequence, read N- to C-terminus: Small ribosomal subunit protein uS12 (123 aa).

At D89 the chain carries 3-methylthioaspartic acid. Residues 101–123 form a disordered region; it reads SLDTSGVKDRKQGRSKYGAKRPK. A compositionally biased stretch (basic residues) spans 113 to 123; sequence GRSKYGAKRPK.

This sequence belongs to the universal ribosomal protein uS12 family. Part of the 30S ribosomal subunit. Contacts proteins S8 and S17. May interact with IF1 in the 30S initiation complex.

Functionally, with S4 and S5 plays an important role in translational accuracy. Interacts with and stabilizes bases of the 16S rRNA that are involved in tRNA selection in the A site and with the mRNA backbone. Located at the interface of the 30S and 50S subunits, it traverses the body of the 30S subunit contacting proteins on the other side and probably holding the rRNA structure together. The combined cluster of proteins S8, S12 and S17 appears to hold together the shoulder and platform of the 30S subunit. This is Small ribosomal subunit protein uS12 from Azotobacter vinelandii (strain DJ / ATCC BAA-1303).